A 194-amino-acid chain; its full sequence is MAACHWIGAKGWAPATGGNMSLREDARWCWLSESGKDKGSLTTDDFLQVEIATNLAPSGRKPSAETGLHTLIYRLFPEANCVLHVHTVNATVLSRVEKSDALHLSGYEMQKSLAGQITHLDDVPVAIFDNDQDIDALAERIARHHRQFPLRYGFLLRGHGLTCWGSDVAVARRHLEGLEFLFECEMQRRLLERA.

Histidine 84 and histidine 86 together coordinate Zn(2+).

It belongs to the aldolase class II family. MtnB subfamily. Zn(2+) is required as a cofactor.

The catalysed reaction is 5-(methylsulfanyl)-D-ribulose 1-phosphate = 5-methylsulfanyl-2,3-dioxopentyl phosphate + H2O. It participates in amino-acid biosynthesis; L-methionine biosynthesis via salvage pathway; L-methionine from S-methyl-5-thio-alpha-D-ribose 1-phosphate: step 2/6. Catalyzes the dehydration of methylthioribulose-1-phosphate (MTRu-1-P) into 2,3-diketo-5-methylthiopentyl-1-phosphate (DK-MTP-1-P). The sequence is that of Methylthioribulose-1-phosphate dehydratase from Cronobacter sakazakii (Enterobacter sakazakii).